The sequence spans 113 residues: uncharacterized protein (113 aa).

Disordered stretches follow at residues 1 to 22 (MGEHAIKRHMRQRKPTKHPLAQ) and 90 to 113 (DGRHTTESSFEHSSPSRSPQSDDL). Residues 90 to 99 (DGRHTTESSF) are compositionally biased toward basic and acidic residues. A compositionally biased stretch (low complexity) spans 100–113 (EHSSPSRSPQSDDL).

This is an uncharacterized protein from Mycobacterium tuberculosis (strain CDC 1551 / Oshkosh).